The following is a 180-amino-acid chain: MTDAGEATPVAELIASLTRQVPDFPKPGIQFKDLTPLFAEATAMTAVTGALARHASGADLVAGIDSRGFLVAAAVADRLHTGVLAIRKGGKLPPPVHAERYDLEYGSATLEIPADGIDLRGRRIVIIDDVLATGGTLAAAARLLRRTGATVTAAAVVFELGALGGRAALAPLPVHSLTCQ.

The protein belongs to the purine/pyrimidine phosphoribosyltransferase family. As to quaternary structure, homodimer.

It localises to the cytoplasm. It catalyses the reaction AMP + diphosphate = 5-phospho-alpha-D-ribose 1-diphosphate + adenine. Its pathway is purine metabolism; AMP biosynthesis via salvage pathway; AMP from adenine: step 1/1. Its function is as follows. Catalyzes a salvage reaction resulting in the formation of AMP, that is energically less costly than de novo synthesis. This is Adenine phosphoribosyltransferase from Mycolicibacterium paratuberculosis (strain ATCC BAA-968 / K-10) (Mycobacterium paratuberculosis).